Here is a 91-residue protein sequence, read N- to C-terminus: Potassium channel toxin Meg-beta-KTx1 (91 aa).

A signal peptide spans 1–19 (MQRNLVVLLFLGMVALSSC). Residues 20–27 (GLREKHFQ) constitute a propeptide that is removed on maturation. In terms of domain architecture, BetaSPN-type CS-alpha/beta spans 54 to 91 (QFGCPAYQGYCDDHCQDIKKQEGFCHGFKCKCGIPMGF). Disulfide bonds link Cys57/Cys78, Cys64/Cys83, and Cys68/Cys85.

The protein belongs to the long chain scorpion toxin family. Class 1 subfamily. In terms of tissue distribution, expressed by the venom gland.

The protein resides in the secreted. Its function is as follows. Inhibits voltage-gated potassium channel. The protein is Potassium channel toxin Meg-beta-KTx1 of Mesobuthus gibbosus (Mediterranean checkered scorpion).